Reading from the N-terminus, the 342-residue chain is Ribosomal RNA small subunit methyltransferase C (342 aa).

Belongs to the methyltransferase superfamily. RsmC family. As to quaternary structure, monomer.

The protein localises to the cytoplasm. It carries out the reaction guanosine(1207) in 16S rRNA + S-adenosyl-L-methionine = N(2)-methylguanosine(1207) in 16S rRNA + S-adenosyl-L-homocysteine + H(+). In terms of biological role, specifically methylates the guanine in position 1207 of 16S rRNA in the 30S particle. The protein is Ribosomal RNA small subunit methyltransferase C of Salmonella gallinarum (strain 287/91 / NCTC 13346).